The primary structure comprises 533 residues: Di/tripeptide-binding protein 4 (533 aa).

A signal peptide spans 1 to 25 (MLHPLLRHLPLALALALCAAGAAQA).

Belongs to the bacterial solute-binding protein 5 family. The complex is composed of two ATP-binding proteins (DppD and DppF), two transmembrane proteins (DppB and DppC) and a solute-binding protein (DppA4). Five orthologous SBPs (DppA1-A5) are present in P.aeruginosa, which increases the substrate specificity of the DppBCDF transporter.

Its function is as follows. Part of the ABC transporter DppABCDF involved in the uptake of various di/tripeptides. Prefers dipeptides with acidic residues at the C-terminal end. Efficiently uses tripeptides. The chain is Di/tripeptide-binding protein 4 from Pseudomonas aeruginosa (strain UCBPP-PA14).